The sequence spans 591 residues: L-fucose isomerase (591 aa).

Active-site proton acceptor residues include E337 and D361. The Mn(2+) site is built by E337, D361, and H528.

It belongs to the L-fucose isomerase family. In terms of assembly, homohexamer. Mn(2+) serves as cofactor.

It localises to the cytoplasm. The enzyme catalyses L-fucose = L-fuculose. Its pathway is carbohydrate degradation; L-fucose degradation; L-lactaldehyde and glycerone phosphate from L-fucose: step 1/3. In terms of biological role, converts the aldose L-fucose into the corresponding ketose L-fuculose. The protein is L-fucose isomerase of Klebsiella pneumoniae subsp. pneumoniae (strain ATCC 700721 / MGH 78578).